A 192-amino-acid chain; its full sequence is Peptidyl-tRNA hydrolase (192 aa).

Y14 contacts tRNA. The active-site Proton acceptor is H19. TRNA-binding residues include Y64, N66, and N112.

It belongs to the PTH family. Monomer.

Its subcellular location is the cytoplasm. The catalysed reaction is an N-acyl-L-alpha-aminoacyl-tRNA + H2O = an N-acyl-L-amino acid + a tRNA + H(+). Hydrolyzes ribosome-free peptidyl-tRNAs (with 1 or more amino acids incorporated), which drop off the ribosome during protein synthesis, or as a result of ribosome stalling. In terms of biological role, catalyzes the release of premature peptidyl moieties from peptidyl-tRNA molecules trapped in stalled 50S ribosomal subunits, and thus maintains levels of free tRNAs and 50S ribosomes. The polypeptide is Peptidyl-tRNA hydrolase (Anaeromyxobacter dehalogenans (strain 2CP-1 / ATCC BAA-258)).